We begin with the raw amino-acid sequence, 209 residues long: Small ribosomal subunit protein uS3c (209 aa).

Positions 39 to 109 constitute a KH type-2 domain; the sequence is IRSCIEKQLH…QIRINLIEIT (71 aa).

Belongs to the universal ribosomal protein uS3 family. Part of the 30S ribosomal subunit.

The protein resides in the plastid. It localises to the chloroplast. The chain is Small ribosomal subunit protein uS3c (rps3) from Gracilaria tenuistipitata (Red alga).